We begin with the raw amino-acid sequence, 276 residues long: MNSLQDLIEQAFENRQNLSLDTASSDLINAINEVLSGLDNGQFRVAEKINGEWTVHQWLKKAVLLSFKLFPNQIIDAGFCKFYDKIPLKYTDCSNEQFQQSGVRVVPHAMVRRGAYIAKNTVLMPSYVNIGAYIDEGVMVDTWATVGSCAQIGKNVHISGGAGIGGVLEPLQANPTIIEDNCFIGARSEIVEGVIVEKNSVISMGVFLGQSTKIYNRITGEVSYGRIPAGSVVVAGNLPSHDGSHSLYCAVIVKQVDEKTRAKVSINDLLRANQDD.

Residues arginine 104 and aspartate 141 each contribute to the substrate site.

This sequence belongs to the transferase hexapeptide repeat family. As to quaternary structure, homotrimer.

It is found in the cytoplasm. It catalyses the reaction (S)-2,3,4,5-tetrahydrodipicolinate + succinyl-CoA + H2O = (S)-2-succinylamino-6-oxoheptanedioate + CoA. Its pathway is amino-acid biosynthesis; L-lysine biosynthesis via DAP pathway; LL-2,6-diaminopimelate from (S)-tetrahydrodipicolinate (succinylase route): step 1/3. The polypeptide is 2,3,4,5-tetrahydropyridine-2,6-dicarboxylate N-succinyltransferase (Legionella pneumophila (strain Paris)).